The primary structure comprises 669 residues: uncharacterized protein (669 aa).

Helical transmembrane passes span 9 to 29 (PLVI…IFIA), 48 to 68 (FSWF…ILSV), 87 to 107 (FLSW…MFFG), 139 to 159 (WGIH…YFGF), 186 to 206 (AIDV…LGFG), 224 to 244 (SFAL…FSAI), 259 to 279 (LTLA…LYLL), 314 to 334 (WTVL…LFIA), 345 to 365 (FIFG…TVFG), 397 to 417 (YLPL…LFFI), 444 to 464 (AIMW…SGGL), and 470 to 490 (MTLI…FSLW).

This sequence belongs to the BCCT transporter (TC 2.A.15) family.

The protein resides in the cell inner membrane. This is an uncharacterized protein from Haemophilus influenzae (strain ATCC 51907 / DSM 11121 / KW20 / Rd).